Consider the following 216-residue polypeptide: 3-keto-L-gulonate-6-phosphate decarboxylase UlaD (216 aa).

Aspartate 11 is a substrate binding site. Residues glutamate 33 and aspartate 62 each coordinate Mg(2+). A substrate-binding site is contributed by arginine 192.

This sequence belongs to the HPS/KGPDC family. KGPDC subfamily. In terms of assembly, homodimer. Requires Mg(2+) as cofactor.

It carries out the reaction 3-dehydro-L-gulonate 6-phosphate + H(+) = L-xylulose 5-phosphate + CO2. The protein operates within cofactor degradation; L-ascorbate degradation; D-xylulose 5-phosphate from L-ascorbate: step 2/4. Functionally, catalyzes the decarboxylation of 3-keto-L-gulonate-6-P into L-xylulose-5-P. Is involved in the anaerobic L-ascorbate utilization. This chain is 3-keto-L-gulonate-6-phosphate decarboxylase UlaD, found in Escherichia coli O127:H6 (strain E2348/69 / EPEC).